The following is a 420-amino-acid chain: UDP-N-acetyl-D-mannosamine dehydrogenase (420 aa).

NAD(+) contacts are provided by tyrosine 13, isoleucine 14, aspartate 33, threonine 85, and threonine 126. The UDP-N-acetyl-alpha-D-mannosaminouronate site is built by arginine 160, valine 161, lysine 212, asparagine 216, arginine 219, histidine 250, arginine 252, and glycine 263. Residue lysine 212 is the Proton donor/acceptor of the active site. Catalysis depends on cysteine 266, which acts as the Nucleophile. 2 residues coordinate UDP-N-acetyl-alpha-D-mannosaminouronate: phenylalanine 330 and lysine 331. Residue arginine 338 participates in NAD(+) binding. A UDP-N-acetyl-alpha-D-mannosaminouronate-binding site is contributed by lysine 416.

It belongs to the UDP-glucose/GDP-mannose dehydrogenase family. WecC subfamily. Homodimer.

The catalysed reaction is UDP-N-acetyl-alpha-D-mannosamine + 2 NAD(+) + H2O = UDP-N-acetyl-alpha-D-mannosaminouronate + 2 NADH + 3 H(+). It participates in bacterial outer membrane biogenesis; enterobacterial common antigen biosynthesis. Functionally, catalyzes the four-electron oxidation of UDP-N-acetyl-D-mannosamine (UDP-ManNAc), reducing NAD(+) and releasing UDP-N-acetylmannosaminuronic acid (UDP-ManNAcA). This is UDP-N-acetyl-D-mannosamine dehydrogenase from Shigella flexneri.